A 125-amino-acid chain; its full sequence is MSVNPKAFPLADSGLTQQILDLVQQASHYKQLRKGANEATKTLNRGISEFIVMAADTEPIEILLHLPLLCEDKNVPYVFVPSKAALGRACGVSRPVISASITTNEASDLLPQIQAIKLAIEKLLI.

It belongs to the eukaryotic ribosomal protein eL8 family. Component of the U3 snoRNP particle. Binds to the C'/D and B/C motifs in U3 snoRNA. Component of the 25S U4/U6.U5 tri-snRNP particle, a subcomplex of the spliceosome. Binds to the 5' stem-loop of U4 snRNA.

It is found in the nucleus. It localises to the nucleolus. In terms of biological role, common component of the spliceosome and rRNA processing machinery. In association with the spliceosomal U4/U6.U5 tri-snRNP particle, required for splicing of pre-mRNA. In association with box C/D snoRNPs, required for processing of pre-ribosomal RNA (rRNA) and site-specific 2'-O-methylation of substrate RNAs. Essential for the accumulation and stability of U4 snRNA, U6 snRNA, and box C/D snoRNAs. In Schizosaccharomyces pombe (strain 972 / ATCC 24843) (Fission yeast), this protein is 13 kDa ribonucleoprotein-associated protein (snu13).